A 57-amino-acid chain; its full sequence is Potassium channel toxin alpha-KTx 8.5 (57 aa).

The signal sequence occupies residues 1–28 (MSRLYAIILIALVLNVIMTIMPDSKVEA). Cystine bridges form between C31–C47, C34–C52, and C38–C54.

The protein belongs to the short scorpion toxin superfamily. Potassium channel inhibitor family. Alpha-KTx 08 subfamily. Expressed by the venom gland.

It is found in the secreted. Functionally, selectively inhibits voltage-gated potassium channels Kv1.2/KCNA2 (IC(50)=183 nM). In Odontobuthus doriae (Yellow Iranian scorpion), this protein is Potassium channel toxin alpha-KTx 8.5.